The following is a 239-amino-acid chain: Sugar fermentation stimulation protein homolog (239 aa).

It belongs to the SfsA family.

The protein is Sugar fermentation stimulation protein homolog of Maridesulfovibrio salexigens (strain ATCC 14822 / DSM 2638 / NCIMB 8403 / VKM B-1763) (Desulfovibrio salexigens).